A 320-amino-acid polypeptide reads, in one-letter code: o-succinylbenzoate synthase (320 aa).

Lys-133 serves as the catalytic Proton donor. Residues Asp-161, Glu-190, and Asp-213 each contribute to the Mg(2+) site. Catalysis depends on Lys-235, which acts as the Proton acceptor.

This sequence belongs to the mandelate racemase/muconate lactonizing enzyme family. MenC type 1 subfamily. It depends on a divalent metal cation as a cofactor.

The catalysed reaction is (1R,6R)-6-hydroxy-2-succinyl-cyclohexa-2,4-diene-1-carboxylate = 2-succinylbenzoate + H2O. Its pathway is quinol/quinone metabolism; 1,4-dihydroxy-2-naphthoate biosynthesis; 1,4-dihydroxy-2-naphthoate from chorismate: step 4/7. It functions in the pathway quinol/quinone metabolism; menaquinone biosynthesis. Converts 2-succinyl-6-hydroxy-2,4-cyclohexadiene-1-carboxylate (SHCHC) to 2-succinylbenzoate (OSB). In Salmonella agona (strain SL483), this protein is o-succinylbenzoate synthase.